We begin with the raw amino-acid sequence, 215 residues long: Phosphatidylserine decarboxylase proenzyme (215 aa).

Ser-184 acts as the Schiff-base intermediate with substrate; via pyruvic acid in catalysis. Ser-184 bears the Pyruvic acid (Ser); by autocatalysis mark.

This sequence belongs to the phosphatidylserine decarboxylase family. PSD-A subfamily. As to quaternary structure, heterodimer of a large membrane-associated beta subunit and a small pyruvoyl-containing alpha subunit. The cofactor is pyruvate. Is synthesized initially as an inactive proenzyme. Formation of the active enzyme involves a self-maturation process in which the active site pyruvoyl group is generated from an internal serine residue via an autocatalytic post-translational modification. Two non-identical subunits are generated from the proenzyme in this reaction, and the pyruvate is formed at the N-terminus of the alpha chain, which is derived from the carboxyl end of the proenzyme. The post-translation cleavage follows an unusual pathway, termed non-hydrolytic serinolysis, in which the side chain hydroxyl group of the serine supplies its oxygen atom to form the C-terminus of the beta chain, while the remainder of the serine residue undergoes an oxidative deamination to produce ammonia and the pyruvoyl prosthetic group on the alpha chain.

Its subcellular location is the cell membrane. It catalyses the reaction a 1,2-diacyl-sn-glycero-3-phospho-L-serine + H(+) = a 1,2-diacyl-sn-glycero-3-phosphoethanolamine + CO2. It participates in phospholipid metabolism; phosphatidylethanolamine biosynthesis; phosphatidylethanolamine from CDP-diacylglycerol: step 2/2. Functionally, catalyzes the formation of phosphatidylethanolamine (PtdEtn) from phosphatidylserine (PtdSer). In Ralstonia pickettii (strain 12J), this protein is Phosphatidylserine decarboxylase proenzyme.